Here is a 93-residue protein sequence, read N- to C-terminus: Small ribosomal subunit protein uS19 (93 aa).

This sequence belongs to the universal ribosomal protein uS19 family.

Protein S19 forms a complex with S13 that binds strongly to the 16S ribosomal RNA. In Leuconostoc citreum (strain KM20), this protein is Small ribosomal subunit protein uS19.